Here is a 184-residue protein sequence, read N- to C-terminus: MKKLSILAVLAASPAMAATGPFLSLSNTNFIVTLAFLLFMGILLYAKVPGRILGMLDKRSVQIRTELEEARALREEARTILASYDRKQKEVQEQAARIVASARDEAQAAAEQAKADLRASIARRLAAAEDQIASAEAGAVRAIREQAVSVAVAAAADLLSRQMTPAAASASIDESIKEVEARFH.

The chain crosses the membrane as a helical span at residues 4 to 24 (LSILAVLAASPAMAATGPFLS).

This sequence belongs to the ATPase B chain family. F-type ATPases have 2 components, F(1) - the catalytic core - and F(0) - the membrane proton channel. F(1) has five subunits: alpha(3), beta(3), gamma(1), delta(1), epsilon(1). F(0) has three main subunits: a(1), b(2) and c(10-14). The alpha and beta chains form an alternating ring which encloses part of the gamma chain. F(1) is attached to F(0) by a central stalk formed by the gamma and epsilon chains, while a peripheral stalk is formed by the delta and b chains.

The protein localises to the cell inner membrane. In terms of biological role, f(1)F(0) ATP synthase produces ATP from ADP in the presence of a proton or sodium gradient. F-type ATPases consist of two structural domains, F(1) containing the extramembraneous catalytic core and F(0) containing the membrane proton channel, linked together by a central stalk and a peripheral stalk. During catalysis, ATP synthesis in the catalytic domain of F(1) is coupled via a rotary mechanism of the central stalk subunits to proton translocation. Functionally, component of the F(0) channel, it forms part of the peripheral stalk, linking F(1) to F(0). This Cereibacter sphaeroides (strain ATCC 17023 / DSM 158 / JCM 6121 / CCUG 31486 / LMG 2827 / NBRC 12203 / NCIMB 8253 / ATH 2.4.1.) (Rhodobacter sphaeroides) protein is ATP synthase subunit b 1.